The chain runs to 506 residues: MISAIEPKNLLRPHSQPVVTTSTLQPDDECNIELRIEDTTVDKYPAKQHARRVAAEIHRDRGLVYLMGQKSTLYEDSDQERTFRQRRYFFYMSGVDEPDCDLTYDINADKLTLYVPDFDLKRTIWMGPTLGREEALQRFDIDEVKYQSSLDEDVKQWAQNQGRGSTLYLLHESQKPAEKVPNVFIDSKTLKHAMDTSRAIKDEHEIGLIRRANEVSAAAHIDVLRGIRKMSNERDIEASFLNTSVSLGAHKQAYHIIAASGSNAATLHYSKNNEPLKGRQFVCLDAGAEWNCYASDVTRTFPMTSQWPSAEAKHIYKLVEHMQESCIVRVKEGVRYLDLHILAHRSLIRGFLTLGIFKGGTLEEIQNSGASNLFFPHGLGHHIGLEVHDVSPESIMAQDNGDYSDNVLISPNNLSPCTTSSPTLKSGMVVTIEPGIYFSQIALDNAKPEQLKYVDLELVKTYMPVGGVRIEDDILVTKTGYENLTTAPKGDGMLEIIRQGDGSCNI.

Residues D285, D296, E433, and E471 each coordinate Mn(2+).

It belongs to the peptidase M24B family. It depends on Mn(2+) as a cofactor.

The catalysed reaction is Release of any N-terminal amino acid, including proline, that is linked to proline, even from a dipeptide or tripeptide.. Catalyzes the removal of a penultimate prolyl residue from the N-termini of peptides. In Ajellomyces dermatitidis (strain ER-3 / ATCC MYA-2586) (Blastomyces dermatitidis), this protein is Probable Xaa-Pro aminopeptidase BDCG_04966.